A 439-amino-acid chain; its full sequence is Xylose isomerase (439 aa).

Catalysis depends on residues His101 and Asp104. Glu232, Glu268, His271, Asp296, Asp307, Asp309, and Asp339 together coordinate Mg(2+).

This sequence belongs to the xylose isomerase family. Homotetramer. It depends on Mg(2+) as a cofactor.

It localises to the cytoplasm. It catalyses the reaction alpha-D-xylose = alpha-D-xylulofuranose. The sequence is that of Xylose isomerase (xylA) from Thermoanaerobacterium saccharolyticum.